The following is a 131-amino-acid chain: MVRNPNLSKEEERLLKLREELKRKKPKFRRQEWHRYKKLGEKWRRPKGRHSKMRRKLKSKPKMPNPGYGSPKKVRGLHPSGYEEVLVYNPKDLEKIDPKRQAARIASRVGRRKRQEILEKAEELGIVVLNA.

Residues 39–77 (LGEKWRRPKGRHSKMRRKLKSKPKMPNPGYGSPKKVRGL) form a disordered region. A compositionally biased stretch (basic residues) spans 44-61 (RRPKGRHSKMRRKLKSKP).

Belongs to the eukaryotic ribosomal protein eL32 family.

The sequence is that of Large ribosomal subunit protein eL32 (rpl32) from Methanopyrus kandleri (strain AV19 / DSM 6324 / JCM 9639 / NBRC 100938).